The chain runs to 67 residues: MPEITVSMAEGRTDEQKAGMMRDITQALVKNLGVDADAVVIQINEAPLRHKMKGGKTFVERAAAAKK.

Proline 2 acts as the Proton acceptor; via imino nitrogen in catalysis.

Belongs to the 4-oxalocrotonate tautomerase family.

The polypeptide is Probable tautomerase bsl7456 (Bradyrhizobium diazoefficiens (strain JCM 10833 / BCRC 13528 / IAM 13628 / NBRC 14792 / USDA 110)).